The primary structure comprises 126 residues: Large ribosomal subunit protein bL17 (126 aa).

This sequence belongs to the bacterial ribosomal protein bL17 family. In terms of assembly, part of the 50S ribosomal subunit. Contacts protein L32.

The sequence is that of Large ribosomal subunit protein bL17 from Limosilactobacillus fermentum (strain NBRC 3956 / LMG 18251) (Lactobacillus fermentum).